A 240-amino-acid chain; its full sequence is Biosynthetic peptidoglycan transglycosylase (240 aa).

Residues 12 to 31 form a helical membrane-spanning segment; sequence ALLWFAGGSVLLVLVFRFVP.

The protein belongs to the glycosyltransferase 51 family.

It is found in the cell inner membrane. The catalysed reaction is [GlcNAc-(1-&gt;4)-Mur2Ac(oyl-L-Ala-gamma-D-Glu-L-Lys-D-Ala-D-Ala)](n)-di-trans,octa-cis-undecaprenyl diphosphate + beta-D-GlcNAc-(1-&gt;4)-Mur2Ac(oyl-L-Ala-gamma-D-Glu-L-Lys-D-Ala-D-Ala)-di-trans,octa-cis-undecaprenyl diphosphate = [GlcNAc-(1-&gt;4)-Mur2Ac(oyl-L-Ala-gamma-D-Glu-L-Lys-D-Ala-D-Ala)](n+1)-di-trans,octa-cis-undecaprenyl diphosphate + di-trans,octa-cis-undecaprenyl diphosphate + H(+). It functions in the pathway cell wall biogenesis; peptidoglycan biosynthesis. Functionally, peptidoglycan polymerase that catalyzes glycan chain elongation from lipid-linked precursors. The chain is Biosynthetic peptidoglycan transglycosylase from Pseudomonas fluorescens (strain Pf0-1).